The primary structure comprises 325 residues: Lactonase drp35 (325 aa).

Ca(2+) is bound by residues glutamate 46, threonine 108, glycine 110, aspartate 128, threonine 131, tyrosine 133, aspartate 136, asparagine 183, aspartate 234, and serine 235. Aspartate 234 functions as the Proton donor in the catalytic mechanism.

Belongs to the SMP-30/CGR1 family. The cofactor is Ca(2+).

The protein resides in the cytoplasm. Functionally, exhibits lactonase activity. Acts in cells with perturbed membrane integrity and is possibly related to the membrane homeostasis. This is Lactonase drp35 (drp35) from Staphylococcus epidermidis (strain ATCC 35984 / DSM 28319 / BCRC 17069 / CCUG 31568 / BM 3577 / RP62A).